We begin with the raw amino-acid sequence, 1558 residues long: ABC transporter NFT1 (1558 aa).

The Extracellular portion of the chain corresponds to 1 to 29 (MIKNGTCPYWERDDLSECARREYIEFKFP). Residue Asn-4 is glycosylated (N-linked (GlcNAc...) asparagine). Residues 30 to 50 (LFILLTGMIYAFCKVFRAFYL) form a helical membrane-spanning segment. The Cytoplasmic segment spans residues 51 to 103 (RGKNHTNEAPEFEEQGNGNHEYARFSVLRLKSAWESRSFCNVNNRSTFDKFKK). Residues 104–124 (FIEGAFIVLQLTIHLYILSSM) traverse the membrane as a helical segment. At 125–130 (PMDNKK) the chain is on the extracellular side. The chain crosses the membrane as a helical span at residues 131–151 (FFHQGFLVQMFLWILLLVVIT). Residues 152 to 169 (LRLISASQSFRWVLACKR) are Cytoplasmic-facing. The chain crosses the membrane as a helical span at residues 170-190 (DLWAVSFYSYASLFTLSILPL). Over 191-201 (RSVFIGKIKDK) the chain is Extracellular. A helical membrane pass occupies residues 202 to 222 (IMVKYIISETFIDLALLLLLS). The Cytoplasmic portion of the chain corresponds to 223–302 (TSSIEGTRYS…SSKKGRLLPN (80 aa)). A helical transmembrane segment spans residues 303 to 323 (IICYFKAVFISQLFLAFVSSF). The ABC transmembrane type-1 1 domain maps to 311 to 621 (FISQLFLAFV…IASTVSLLIQ (311 aa)). Residues 324–351 (LNFVPSLLMPRILSYVNDPKSKSWNLVS) are Extracellular-facing. The chain crosses the membrane as a helical span at residues 352–374 (LYVSSMLVSKIIATTCRGQGLFL). Residues 375–449 (GEKGTMQLRT…VMSIDAFKVS (75 aa)) lie on the Cytoplasmic side of the membrane. Residues 410–434 (NASTSFEENPDSSEAEPRKKSSRKD) form a disordered region. Positions 424–434 (AEPRKKSSRKD) are enriched in basic and acidic residues. A helical membrane pass occupies residues 450–470 (EAMNTFYLACEAVFMTVTALM). Over 471–481 (ILYSLLGWSAF) the chain is Extracellular. A helical transmembrane segment spans residues 482-504 (AGTFALLAMIPLNFWCATFYGNY). The Cytoplasmic portion of the chain corresponds to 505 to 558 (QADQLILTDKRTSGISEALNSIRVIKLLAWENLFYQKIINVRDGEIRLLKKKAT). The helical transmembrane segment at 559–579 (IFFLNHLIWFFGPTLVSAITF) threads the bilayer. Residues 580–584 (SVFIK) are Extracellular-facing. A helical transmembrane segment spans residues 585 to 605 (FQNQTLTPTIAFTALSLFAIL). Over 606–953 (RTPMDQIAST…KFSAYKWLAD (348 aa)) the chain is Cytoplasmic. Positions 651–892 (FGFEDASMEW…NEFLRESINN (242 aa)) constitute an ABC transporter 1 domain. An ATP-binding site is contributed by 686–693 (GPTGSGKS). Residues 892–901 (NDSKNTTHNQ) are compositionally biased toward polar residues. A disordered region spans residues 892–926 (NDSKNTTHNQIDLKRSTTSKKTKNGDPEGGNSQDE). A helical membrane pass occupies residues 954-974 (YFGGLGVVFVFTSSSILIHGI). In terms of domain architecture, ABC transmembrane type-1 2 spans 961–1251 (VFVFTSSSIL…IIKVFSSVEL (291 aa)). Topologically, residues 975–1013 (TLSQGFWLRYWLDTGSSGSKSTWLYRIVEGHSNIYFLLT) are extracellular. The chain crosses the membrane as a helical span at residues 1014 to 1034 (YIIIGLVSSFLTSGKVWIAII). Over 1035–1082 (SGTNVTKKIFAKLLSSILYAKLRFHNVTPTGRIMNRFSKDMDIIDQQL) the chain is Cytoplasmic. Residues 1083-1105 (IPNFEGLSYSVVVCLWIILLIGY) form a helical membrane-spanning segment. The Extracellular portion of the chain corresponds to 1106-1109 (VTPQ). A helical transmembrane segment spans residues 1110–1132 (FLLFAIPLCALYYTVCTLYLRAS). Topologically, residues 1133–1199 (RELKRIDNIN…ATEWITYRVD (67 aa)) are cytoplasmic. A helical membrane pass occupies residues 1200-1220 (IIGTLVLFSSSVMIIMKASYL). At 1221–1222 (DA) the chain is on the extracellular side. The helical transmembrane segment at 1223–1243 (GLAGILLSNAFSFTETAQWII) threads the bilayer. Residues 1244–1558 (KVFSSVELLM…LAKVSFDNKR (315 aa)) are Cytoplasmic-facing. The ABC transporter 2 domain maps to 1285–1538 (VELKNLSLRY…RNTIFYRLCR (254 aa)). 1319-1326 (GRTGAGKS) lines the ATP pocket.

This sequence belongs to the ABC transporter superfamily. ABCC family. Conjugate transporter (TC 3.A.1.208) subfamily.

It is found in the membrane. The sequence is that of ABC transporter NFT1 (NFT1) from Saccharomyces cerevisiae (Baker's yeast).